Consider the following 123-residue polypeptide: Large ribosomal subunit protein bL12 (123 aa).

It belongs to the bacterial ribosomal protein bL12 family. As to quaternary structure, homodimer. Part of the ribosomal stalk of the 50S ribosomal subunit. Forms a multimeric L10(L12)X complex, where L10 forms an elongated spine to which 2 to 4 L12 dimers bind in a sequential fashion. Binds GTP-bound translation factors.

Functionally, forms part of the ribosomal stalk which helps the ribosome interact with GTP-bound translation factors. Is thus essential for accurate translation. This Rhodopseudomonas palustris (strain BisB18) protein is Large ribosomal subunit protein bL12.